The following is a 362-amino-acid chain: Prostaglandin F2-alpha receptor (362 aa).

Residues 1 to 31 lie on the Extracellular side of the membrane; sequence MSTNNSVQPVSPASELLSNTTCQLEEDLSIS. Asn-4 and Asn-19 each carry an N-linked (GlcNAc...) asparagine glycan. Residues 32–54 traverse the membrane as a helical segment; the sequence is FSIIFMTVGILSNSLAIAILMKA. The Cytoplasmic portion of the chain corresponds to 55-69; it reads YQRFRQKYKSSFLLL. A helical transmembrane segment spans residues 70–90; that stretch reads ASALVITDFFGHLINGTIAVF. Topologically, residues 91-109 are extracellular; that stretch reads VYASDKDWIYFDKSNILCS. Cys-108 and Cys-186 are disulfide-bonded. Residues 110–131 traverse the membrane as a helical segment; the sequence is IFGICMVFSGLCPLFLGSLMAI. Residues 132 to 152 are Cytoplasmic-facing; the sequence is ERCIGVTKPIFHSTKITTKHV. A helical transmembrane segment spans residues 153–175; sequence KMMLSGVCFFAVFVALLPILGHR. Over 176-198 the chain is Extracellular; it reads DYKIQASRTWCFYKTDQIKDWED. The helical transmembrane segment at 199 to 224 threads the bilayer; sequence RFYLLLFAFLGLLALGISFVCNAITG. Topologically, residues 225–250 are cytoplasmic; it reads ISLLKVKFRSQQHRQGRSHHFEMVIQ. Residues 251-267 form a helical membrane-spanning segment; that stretch reads LLGIMCVSCICWSPFLV. Residues 268–285 are Extracellular-facing; the sequence is TMASIGMNIQDFKDSCER. A helical membrane pass occupies residues 286–307; sequence TLFTLRMATWNQILDPWVYILL. Topologically, residues 308 to 362 are cytoplasmic; that stretch reads RKAVLRNLYVCTRRCCGVHVISLHVWELSSIKNSLKVAAISDLPVTEKVTQQTST.

The protein belongs to the G-protein coupled receptor 1 family.

The protein resides in the cell membrane. In terms of biological role, receptor for prostaglandin F2-alpha (PGF2-alpha). The activity of this receptor is mediated by G proteins which activate a phosphatidylinositol-calcium second messenger system. Initiates luteolysis in the corpus luteum. The protein is Prostaglandin F2-alpha receptor (PTGFR) of Ovis aries (Sheep).